Here is a 563-residue protein sequence, read N- to C-terminus: E3 ubiquitin-protein ligase IpaH2.5 (563 aa).

The interaction with target proteins stretch occupies residues 1–270 (MIKSTNIQVI…PDYSGPQIFF (270 aa)). 8 LRR repeats span residues 69 to 90 (LQNQ…PDLP), 91 to 115 (PQIT…MLKV), 117 to 130 (HAQF…PALP), 131 to 150 (ETLE…PFLP), 151 to 170 (ENLT…PLLP), 171 to 195 (PELK…KLEG), 197 to 209 (ALAN…LPEL), and 210 to 233 (PFSM…VLRL). The interval 271–281 (SMGNSATISAP) is linker. The segment at 282–563 (EHSLADAVTA…YRQLTDEVLA (282 aa)) is E3 ubiquitin-protein ligase catalytic domain. One can recognise an NEL domain in the interval 284–563 (SLADAVTAWF…YRQLTDEVLA (280 aa)). C368 acts as the Glycyl thioester intermediate in catalysis.

This sequence belongs to the LRR-containing bacterial E3 ligase family. Interacts with human RBCK1/HOIL-1 and RNF31/HOIP components of the LUBAC complex. In terms of processing, ubiquitinated in the presence of host E1 ubiquitin-activating enzyme, E2 ubiquitin-conjugating enzyme and ubiquitin.

It is found in the secreted. It localises to the host cytoplasm. The catalysed reaction is S-ubiquitinyl-[E2 ubiquitin-conjugating enzyme]-L-cysteine + [acceptor protein]-L-lysine = [E2 ubiquitin-conjugating enzyme]-L-cysteine + N(6)-ubiquitinyl-[acceptor protein]-L-lysine.. Its pathway is protein modification; protein ubiquitination. With respect to regulation, exists in an autoinhibited state in the absence of substrate protein, probably due to interactions of the leucine-rich repeat domain with the catalytic domain. Is activated upon binding to a substrate protein. Functionally, E3 ubiquitin-protein ligase effector that inhibits host cell innate immunity during bacterial infection by catalyzing 'Lys-48'-linked polyubiquitination and subsequent degradation of host RNF31/HOIP. Host RNF31/HOIP is the catalytic component of the LUBAC complex, which conjugates linear ('Met-1'-linked) polyubiquitin chains at the surface of bacteria invading the host cytosol to form the ubiquitin coat surrounding bacteria. The bacterial ubiquitin coat acts as an 'eat-me' signal for xenophagy and promotes NF-kappa-B activation. This chain is E3 ubiquitin-protein ligase IpaH2.5, found in Shigella flexneri.